Reading from the N-terminus, the 987-residue chain is Valine--tRNA ligase (987 aa).

The short motif at 45-55 (PNVTGSLHMGH) is the 'HIGH' region element. Residues 634–638 (KMSKS) carry the 'KMSKS' region motif. K637 contacts ATP. Residues 917–985 (VIDIGAEKAR…LSAALARLSE (69 aa)) adopt a coiled-coil conformation.

The protein belongs to the class-I aminoacyl-tRNA synthetase family. ValS type 1 subfamily. As to quaternary structure, monomer.

It localises to the cytoplasm. The catalysed reaction is tRNA(Val) + L-valine + ATP = L-valyl-tRNA(Val) + AMP + diphosphate. Catalyzes the attachment of valine to tRNA(Val). As ValRS can inadvertently accommodate and process structurally similar amino acids such as threonine, to avoid such errors, it has a 'posttransfer' editing activity that hydrolyzes mischarged Thr-tRNA(Val) in a tRNA-dependent manner. The sequence is that of Valine--tRNA ligase from Cereibacter sphaeroides (strain ATCC 17023 / DSM 158 / JCM 6121 / CCUG 31486 / LMG 2827 / NBRC 12203 / NCIMB 8253 / ATH 2.4.1.) (Rhodobacter sphaeroides).